A 155-amino-acid chain; its full sequence is Small ribosomal subunit protein uS7c (155 aa).

It belongs to the universal ribosomal protein uS7 family. In terms of assembly, part of the 30S ribosomal subunit.

Its subcellular location is the plastid. The protein resides in the chloroplast. Its function is as follows. One of the primary rRNA binding proteins, it binds directly to 16S rRNA where it nucleates assembly of the head domain of the 30S subunit. This is Small ribosomal subunit protein uS7c (rps7) from Ginkgo biloba (Ginkgo).